A 142-amino-acid polypeptide reads, in one-letter code: Anti-sigma F factor (142 aa).

It belongs to the anti-sigma-factor family.

The catalysed reaction is L-seryl-[protein] + ATP = O-phospho-L-seryl-[protein] + ADP + H(+). The enzyme catalyses L-threonyl-[protein] + ATP = O-phospho-L-threonyl-[protein] + ADP + H(+). Binds to sigma F and blocks its ability to form an RNA polymerase holoenzyme (E-sigma F). Phosphorylates SpoIIAA on a serine residue. This phosphorylation may enable SpoIIAA to act as an anti-anti-sigma factor that counteracts SpoIIAB and thus releases sigma F from inhibition. In Clostridium kluyveri (strain NBRC 12016), this protein is Anti-sigma F factor.